We begin with the raw amino-acid sequence, 377 residues long: ATP-dependent (S)-NAD(P)H-hydrate dehydratase (377 aa).

A YjeF C-terminal domain is found at 10 to 366; it reads LLHLSRQLIQ…EYLHESFTEL (357 aa). (6S)-NADPHX-binding positions include Gly-148 and 201–207; that span reads NVVEFQR. ATP-binding positions include 245-249 and 264-273; these read KGEHD and GSNKRVGGQG. Asp-274 is a (6S)-NADPHX binding site.

This sequence belongs to the NnrD/CARKD family. Requires Mg(2+) as cofactor.

It is found in the cytoplasm. The catalysed reaction is (6S)-NADHX + ATP = ADP + phosphate + NADH + H(+). It catalyses the reaction (6S)-NADPHX + ATP = ADP + phosphate + NADPH + H(+). Catalyzes the dehydration of the S-form of NAD(P)HX at the expense of ATP, which is converted to ADP. Together with NAD(P)HX epimerase, which catalyzes the epimerization of the S- and R-forms, the enzyme allows the repair of both epimers of NAD(P)HX, a damaged form of NAD(P)H that is a result of enzymatic or heat-dependent hydration. The protein is ATP-dependent (S)-NAD(P)H-hydrate dehydratase of Candida albicans (strain SC5314 / ATCC MYA-2876) (Yeast).